The chain runs to 235 residues: MKIIKVKDQVEGGQKGFEIFKEGLANDAKVFGLATGSSPIKFYETVVASDLDFTNCTSVNLDEYVGLSADNSQSYHYFMKENLFNKKPFAKSYLPNGLASDIPAELKRYDQVIADNPVDIQILGIGQNGHIGFNEPGAAFDSNTQEVQLTESTIKANARFFENEADVPTKAISMGIGSILKAKKIVLFAYGESKAEAIKGTVEGPQTTDVPASALQLHDDVTIIVDEAAASLLSK.

Aspartate 62 acts as the Proton acceptor; for enolization step in catalysis. Asparagine 128 acts as the For ring-opening step in catalysis. The Proton acceptor; for ring-opening step role is filled by histidine 130. The active-site For ring-opening step is the glutamate 135.

It belongs to the glucosamine/galactosamine-6-phosphate isomerase family. NagB subfamily.

The enzyme catalyses alpha-D-glucosamine 6-phosphate + H2O = beta-D-fructose 6-phosphate + NH4(+). It participates in amino-sugar metabolism; N-acetylneuraminate degradation; D-fructose 6-phosphate from N-acetylneuraminate: step 5/5. Catalyzes the reversible isomerization-deamination of glucosamine 6-phosphate (GlcN6P) to form fructose 6-phosphate (Fru6P) and ammonium ion. In Latilactobacillus sakei subsp. sakei (strain 23K) (Lactobacillus sakei subsp. sakei), this protein is Glucosamine-6-phosphate deaminase.